A 274-amino-acid chain; its full sequence is Large ribosomal subunit protein uL2 (274 aa).

Disordered regions lie at residues 38–57 (KRTG…VGGG) and 224–256 (AMNP…KGYK). The segment covering 229 to 239 (DHPHGGGEGRN) has biased composition (basic and acidic residues).

It belongs to the universal ribosomal protein uL2 family. As to quaternary structure, part of the 50S ribosomal subunit. Forms a bridge to the 30S subunit in the 70S ribosome.

Its function is as follows. One of the primary rRNA binding proteins. Required for association of the 30S and 50S subunits to form the 70S ribosome, for tRNA binding and peptide bond formation. It has been suggested to have peptidyltransferase activity; this is somewhat controversial. Makes several contacts with the 16S rRNA in the 70S ribosome. This Acinetobacter baumannii (strain AB307-0294) protein is Large ribosomal subunit protein uL2.